Reading from the N-terminus, the 437-residue chain is CCA-adding enzyme (437 aa).

The ATP site is built by S50 and K53. Residues S50 and K53 each coordinate CTP. Residues D61, D63, and D112 each contribute to the Mg(2+) site. ATP contacts are provided by H135, K155, and Y164. Residues H135, K155, and Y164 each coordinate CTP.

It belongs to the tRNA nucleotidyltransferase/poly(A) polymerase family. Archaeal CCA-adding enzyme subfamily. As to quaternary structure, homodimer. Mg(2+) is required as a cofactor.

It catalyses the reaction a tRNA precursor + 2 CTP + ATP = a tRNA with a 3' CCA end + 3 diphosphate. The enzyme catalyses a tRNA with a 3' CCA end + 2 CTP + ATP = a tRNA with a 3' CCACCA end + 3 diphosphate. Catalyzes the addition and repair of the essential 3'-terminal CCA sequence in tRNAs without using a nucleic acid template. Adds these three nucleotides in the order of C, C, and A to the tRNA nucleotide-73, using CTP and ATP as substrates and producing inorganic pyrophosphate. tRNA 3'-terminal CCA addition is required both for tRNA processing and repair. Also involved in tRNA surveillance by mediating tandem CCA addition to generate a CCACCA at the 3' terminus of unstable tRNAs. While stable tRNAs receive only 3'-terminal CCA, unstable tRNAs are marked with CCACCA and rapidly degraded. In Thermoplasma volcanium (strain ATCC 51530 / DSM 4299 / JCM 9571 / NBRC 15438 / GSS1), this protein is CCA-adding enzyme.